Here is a 259-residue protein sequence, read N- to C-terminus: 5'-nucleotidase SurE (259 aa).

D8, D9, S41, and N100 together coordinate a divalent metal cation.

Belongs to the SurE nucleotidase family. A divalent metal cation serves as cofactor.

It is found in the cytoplasm. It catalyses the reaction a ribonucleoside 5'-phosphate + H2O = a ribonucleoside + phosphate. Nucleotidase that shows phosphatase activity on nucleoside 5'-monophosphates. The sequence is that of 5'-nucleotidase SurE from Natranaerobius thermophilus (strain ATCC BAA-1301 / DSM 18059 / JW/NM-WN-LF).